A 585-amino-acid polypeptide reads, in one-letter code: Involucrin (585 aa).

Over residues methionine 1–leucine 15 the composition is skewed to polar residues. Residues methionine 1–glutamine 132 are disordered. Residue glutamine 79 is the site of Omega-hydroxyceramide glutamate ester attachment. Residues tryptophan 92–arginine 115 show a composition bias toward basic and acidic residues. Residues glutamine 118 and glutamine 133 are each lipidated (omega-hydroxyceramide glutamate ester). A disordered region spans residues lysine 149 to leucine 540. 23 consecutive repeat copies span residues leucine 153–histidine 162, leucine 163–glutamine 172, leucine 173–glutamine 182, leucine 183–glutamine 192, leucine 193–glutamine 202, leucine 203–glutamine 212, leucine 213–glutamine 222, leucine 223–glutamine 232, leucine 233–glutamine 242, leucine 243–glutamine 252, leucine 253–glutamine 262, leucine 263–glutamine 272, leucine 273–glutamine 282, leucine 283–glutamine 292, leucine 293–glutamine 302, proline 303–glutamine 312, leucine 313–glutamine 322, proline 323–glutamine 332, leucine 333–glutamine 342, leucine 343–glutamine 352, leucine 353–glutamine 362, leucine 363–glutamine 372, and leucine 373–glutamine 382. The interval leucine 153–glutamine 542 is 39 X 10 AA approximate tandem repeats of [LP]-[EKG]-[LHVYQEK]-[PLSQE]-[EQDV]-[QHEKRGA]-Q-[EMVQLP]-[GKLE]-[QHVNLD]. Basic and acidic residues predominate over residues glutamine 159–glutamine 178. The span at glutamine 179–glycine 261 shows a compositional bias: low complexity. Residues glutamine 262–glycine 271 show a composition bias toward basic and acidic residues. Basic and acidic residues-rich tracts occupy residues glutamine 292–glutamate 304, lysine 314–glutamine 328, and glycine 341–glutamate 360. Low complexity predominate over residues glycine 361 to proline 383. The 24; approximate repeat unit spans residues proline 383 to glutamine 392. Basic and acidic residues predominate over residues lysine 384–leucine 393. Repeat copies occupy residues leucine 393–glutamine 402, leucine 403–glutamine 412, leucine 413–histidine 422, leucine 423–histidine 432, leucine 433–histidine 442, leucine 443–valine 452, proline 453–asparagine 462, leucine 463–leucine 472, proline 473–histidine 482, leucine 483–leucine 492, and proline 493–histidine 502. Basic and acidic residues-rich tracts occupy residues glutamine 415–glutamate 424 and lysine 431–glutamate 444. Low complexity predominate over residues glutamine 445–asparagine 462. The span at glutamine 479 to alanine 488 shows a compositional bias: basic and acidic residues. An Isoglutamyl lysine isopeptide (Gln-Lys) (interchain with K-? in other proteins) cross-link involves residue glutamine 496. Residues lysine 501–glutamine 535 show a composition bias toward basic and acidic residues. Residues leucine 503–histidine 512 form a 36; approximate repeat. Repeat copies occupy residues proline 513 to histidine 522 and leucine 523 to aspartate 532. Residues leucine 533–glutamine 542 form a 39; approximate repeat.

This sequence belongs to the involucrin family. In terms of assembly, directly or indirectly cross-linked to cornifelin (CNFN). In terms of processing, substrate of transglutaminase. Some glutamines and lysines are cross-linked to other involucrin molecules, to other proteins such as keratin, desmoplakin, periplakin and envoplakin, and to lipids like omega-hydroxyceramide. In terms of tissue distribution, keratinocytes of epidermis and other stratified squamous epithelia.

The protein localises to the cytoplasm. In terms of biological role, part of the insoluble cornified cell envelope (CE) of stratified squamous epithelia. In Homo sapiens (Human), this protein is Involucrin (IVL).